A 161-amino-acid chain; its full sequence is 6,7-dimethyl-8-ribityllumazine synthase (161 aa).

Residues Trp31, Ser63–Glu65, and Val85–Ile87 each bind 5-amino-6-(D-ribitylamino)uracil. Gly90 to Thr91 is a binding site for (2S)-2-hydroxy-3-oxobutyl phosphate. Residue His93 is the Proton donor of the active site. Residue Phe118 participates in 5-amino-6-(D-ribitylamino)uracil binding. A (2S)-2-hydroxy-3-oxobutyl phosphate-binding site is contributed by Arg132.

The protein belongs to the DMRL synthase family.

The enzyme catalyses (2S)-2-hydroxy-3-oxobutyl phosphate + 5-amino-6-(D-ribitylamino)uracil = 6,7-dimethyl-8-(1-D-ribityl)lumazine + phosphate + 2 H2O + H(+). Its pathway is cofactor biosynthesis; riboflavin biosynthesis; riboflavin from 2-hydroxy-3-oxobutyl phosphate and 5-amino-6-(D-ribitylamino)uracil: step 1/2. Functionally, catalyzes the formation of 6,7-dimethyl-8-ribityllumazine by condensation of 5-amino-6-(D-ribitylamino)uracil with 3,4-dihydroxy-2-butanone 4-phosphate. This is the penultimate step in the biosynthesis of riboflavin. This chain is 6,7-dimethyl-8-ribityllumazine synthase, found in Arthrobacter sp. (strain FB24).